The following is a 487-amino-acid chain: Cytochrome P450 monooxygenase pyvB (487 aa).

A helical transmembrane segment spans residues 17 to 37 (PAYSSVVIGALVVCLVCLVWP). C426 contributes to the heme binding site.

Belongs to the cytochrome P450 family. The cofactor is heme.

Its subcellular location is the membrane. Its pathway is secondary metabolite biosynthesis. Its function is as follows. Cytochrome P450 monooxygenase; part of the gene cluster that mediates the biosynthesis of pyranoviolin A, a pyranonigrin analog with a C-3 methoxy group. Initially, the PKS portion of pyvA synthesizes C-10 carbon chain from 5 molecules of malonyl-CoA, which is then condensed with the thiolation (T) domain-bound glycine activated by the adenylation (A) domain. The subsequent chain release by Dieckmann condensation (DKC) could be catalyzed by the TE domain present at the C-terminus of pyvA and/or the alpha/beta hydrolase pyvD, installing the tetramic acid moiety. The FAD-dependent monooxygenase pyvC next epoxidizes one of the olefins of the polyketide part, and the epoxide ring-opening induces the dihydro-gamma-pyrone ring formation. The cytochrome P450 monooxygeanse pyvB would be responsible for the 2 consecutive reactions, in which the dihydro-gamma-pyrone is oxidized to gamma-pyrone and C-7 is hydroxylated to yield pyranonigrin F. Finally, the O-methyltransferase pyvH methylates the C-3 hydroxy group to complete the biosynthesis. The protein is Cytochrome P450 monooxygenase pyvB of Aspergillus violaceofuscus (strain CBS 115571).